The following is a 469-amino-acid chain: Cholesterol 7-desaturase nvd (469 aa).

The first 25 residues, 1 to 25 (MASFCASKFLPGLLMLGLGLAVALA), serve as a signal peptide directing secretion. A helical membrane pass occupies residues 58 to 78 (NFVASQTLLTLTIFGVASFIL). Residues 132–238 (IPLVASQDLV…VIEQNGFVLV (107 aa)) form the Rieske domain. Positions 172, 174, 192, and 195 each coordinate [2Fe-2S] cluster.

The protein belongs to the cholesterol 7-desaturase family. [2Fe-2S] cluster serves as cofactor.

It localises to the membrane. The catalysed reaction is cholesterol + NADPH + O2 + H(+) = 7-dehydrocholesterol + NADP(+) + 2 H2O. It carries out the reaction cholesterol + NADH + O2 + H(+) = 7-dehydrocholesterol + NAD(+) + 2 H2O. Its pathway is steroid hormone biosynthesis; dafachronic acid biosynthesis. Catalyzes the production of 7-dehydrocholesterol (7-DHC or cholesta-5,7-dien-3beta-ol) by inserting a double bond (desaturating) at the C7-C8 single bond of cholesterol. Essential regulator of steroid biosynthesis as this reaction is the first step in the synthesis of the steroid hormone Delta(7)-dafachronic acid. This is Cholesterol 7-desaturase nvd from Hemicentrotus pulcherrimus (Sea urchin).